A 176-amino-acid polypeptide reads, in one-letter code: Cytochrome b (176 aa).

Transmembrane regions (helical) follow at residues 33 to 53 (FGSL…FLAM), 77 to 98 (WILR…YLHV), and 113 to 133 (WNIG…GYVL). Positions 83 and 97 each coordinate heme b.

Belongs to the cytochrome b family. As to quaternary structure, the cytochrome bc1 complex contains 11 subunits: 3 respiratory subunits (MT-CYB, CYC1 and UQCRFS1), 2 core proteins (UQCRC1 and UQCRC2) and 6 low-molecular weight proteins (UQCRH/QCR6, UQCRB/QCR7, UQCRQ/QCR8, UQCR10/QCR9, UQCR11/QCR10 and a cleavage product of UQCRFS1). This cytochrome bc1 complex then forms a dimer. It depends on heme b as a cofactor.

The protein resides in the mitochondrion inner membrane. Functionally, component of the ubiquinol-cytochrome c reductase complex (complex III or cytochrome b-c1 complex) that is part of the mitochondrial respiratory chain. The b-c1 complex mediates electron transfer from ubiquinol to cytochrome c. Contributes to the generation of a proton gradient across the mitochondrial membrane that is then used for ATP synthesis. The protein is Cytochrome b (MT-CYB) of Myotis leibii (Eastern small-footed myotis).